We begin with the raw amino-acid sequence, 224 residues long: Cardosin-E (224 aa).

The 221-residue stretch at 1-221 (DSGSAIVALT…DYGNLLVGFA (221 aa)) folds into the Peptidase A1 domain. D35 is an active-site residue. A disulfide bridge connects residues C125 and C129. Residue D134 is part of the active site.

This sequence belongs to the peptidase A1 family. Heterodimer of a light chain and a heavy chain. An intermediate form is produced first, and undergoes proteolytic processing to remove the internal plant-specific insert (PSI) and the propeptide. Post-translationally, N-glycosylated. In terms of tissue distribution, pistils.

It localises to the microsome membrane. Its subcellular location is the protein storage vacuole. It is found in the secreted. The protein resides in the cell wall. The protein localises to the extracellular space. It localises to the extracellular matrix. Inhibited by pepstatin. Its function is as follows. Aspartic protease with a high preference for bonds between hydrophobic residues. The sequence is that of Cardosin-E from Cynara cardunculus (Cardoon).